A 177-amino-acid chain; its full sequence is Large ribosomal subunit protein uL6 (177 aa).

Belongs to the universal ribosomal protein uL6 family. Part of the 50S ribosomal subunit.

In terms of biological role, this protein binds to the 23S rRNA, and is important in its secondary structure. It is located near the subunit interface in the base of the L7/L12 stalk, and near the tRNA binding site of the peptidyltransferase center. This is Large ribosomal subunit protein uL6 from Chelativorans sp. (strain BNC1).